The primary structure comprises 343 residues: MTDTLTITRPDDWHLHVRDGAALEAVVPHSARQFGRALVMPNLRPPVTTAAQAVAYRDRIRAAVPPGTAFEPVMSLYLTDKLPPEEIALAAEAGVRALKLYPAGATTNSDAGVTDIRHTYKTLEAMQKHGLLLLVHGEVTDPAVDLFDREAVFIDRVMIPLRRDFPELKVVFEHLTTQEGAHYVRDANRFTAATITAHHLLYNRNAIFTGGIRPHYYCLPVLKRETHRVALVQAATSGSDRFFLGTDSAPHPAHLKEHALGCAGCYTALTAIELYAEAFDSVDALDKLEGFASFHGPDFYGLPRNSGTITLKRESWTVPETVPYGDATLKPLRGGETVHWKLM.

The Zn(2+) site is built by His14 and His16. Substrate-binding positions include 16–18 and Asn42; that span reads HVR. Residues Lys99, His136, and His174 each coordinate Zn(2+). N6-carboxylysine is present on Lys99. His136 is a substrate binding site. Leu219 serves as a coordination point for substrate. Asp247 is a Zn(2+) binding site. Residue Asp247 is part of the active site. Residues His251 and Ala263 each contribute to the substrate site.

It belongs to the metallo-dependent hydrolases superfamily. DHOase family. Class II DHOase subfamily. As to quaternary structure, homodimer. Zn(2+) serves as cofactor.

The catalysed reaction is (S)-dihydroorotate + H2O = N-carbamoyl-L-aspartate + H(+). The protein operates within pyrimidine metabolism; UMP biosynthesis via de novo pathway; (S)-dihydroorotate from bicarbonate: step 3/3. In terms of biological role, catalyzes the reversible cyclization of carbamoyl aspartate to dihydroorotate. The polypeptide is Dihydroorotase (Variovorax paradoxus (strain S110)).